We begin with the raw amino-acid sequence, 489 residues long: Toxin coregulated pilus biosynthesis outer membrane protein C (489 aa).

The N-terminal stretch at 1–16 (MKKTIISTLVIGLVSG) is a signal peptide. Cysteine 17 is lipidated: N-palmitoyl cysteine. Cysteine 17 carries S-diacylglycerol cysteine lipidation. 4 helical membrane passes run 174–190 (FSSSMQIGGTSGTSSGL), 294–308 (AISLSQVGGGLGASY), 402–417 (QLVSIGTAQGITLPTV), and 442–457 (NYIQNSNGVQLLGGGT).

It localises to the cell membrane. In terms of biological role, involved in TCP pilus biogenesis. In Vibrio cholerae serotype O1 (strain ATCC 39315 / El Tor Inaba N16961), this protein is Toxin coregulated pilus biosynthesis outer membrane protein C (tcpC).